We begin with the raw amino-acid sequence, 444 residues long: Glutamyl-tRNA reductase (444 aa).

Substrate is bound by residues 41–44 (TCNR), serine 102, 107–109 (ERE), and glutamine 113. Cysteine 42 acts as the Nucleophile in catalysis. 181-186 (GTGSYA) provides a ligand contact to NADP(+).

This sequence belongs to the glutamyl-tRNA reductase family. Homodimer.

It catalyses the reaction (S)-4-amino-5-oxopentanoate + tRNA(Glu) + NADP(+) = L-glutamyl-tRNA(Glu) + NADPH + H(+). It participates in porphyrin-containing compound metabolism; protoporphyrin-IX biosynthesis; 5-aminolevulinate from L-glutamyl-tRNA(Glu): step 1/2. In terms of biological role, catalyzes the NADPH-dependent reduction of glutamyl-tRNA(Glu) to glutamate 1-semialdehyde (GSA). In Cutibacterium acnes (strain DSM 16379 / KPA171202) (Propionibacterium acnes), this protein is Glutamyl-tRNA reductase.